The chain runs to 512 residues: Bifunctional purine biosynthesis protein PurH (512 aa).

Positions 1-144 constitute an MGS-like domain; that stretch reads MKRALVSVSD…KNYRDVVVVV (144 aa).

Belongs to the PurH family.

The enzyme catalyses (6R)-10-formyltetrahydrofolate + 5-amino-1-(5-phospho-beta-D-ribosyl)imidazole-4-carboxamide = 5-formamido-1-(5-phospho-D-ribosyl)imidazole-4-carboxamide + (6S)-5,6,7,8-tetrahydrofolate. It carries out the reaction IMP + H2O = 5-formamido-1-(5-phospho-D-ribosyl)imidazole-4-carboxamide. The protein operates within purine metabolism; IMP biosynthesis via de novo pathway; 5-formamido-1-(5-phospho-D-ribosyl)imidazole-4-carboxamide from 5-amino-1-(5-phospho-D-ribosyl)imidazole-4-carboxamide (10-formyl THF route): step 1/1. Its pathway is purine metabolism; IMP biosynthesis via de novo pathway; IMP from 5-formamido-1-(5-phospho-D-ribosyl)imidazole-4-carboxamide: step 1/1. The sequence is that of Bifunctional purine biosynthesis protein PurH from Ligilactobacillus salivarius (strain UCC118) (Lactobacillus salivarius).